An 81-amino-acid polypeptide reads, in one-letter code: RNA-binding protein Hfq (81 aa).

One can recognise a Sm domain in the interval 11–71 (DIFLNSARKN…VSTITPLRPI (61 aa)).

This sequence belongs to the Hfq family. Homohexamer.

RNA chaperone that binds small regulatory RNA (sRNAs) and mRNAs to facilitate mRNA translational regulation in response to envelope stress, environmental stress and changes in metabolite concentrations. Also binds with high specificity to tRNAs. This chain is RNA-binding protein Hfq, found in Clostridium acetobutylicum (strain ATCC 824 / DSM 792 / JCM 1419 / IAM 19013 / LMG 5710 / NBRC 13948 / NRRL B-527 / VKM B-1787 / 2291 / W).